The primary structure comprises 103 residues: ATP synthase F(0) complex subunit g, mitochondrial (103 aa).

A2 bears the N-acetylalanine mark. K11, K24, and K54 each carry N6-acetyllysine.

This sequence belongs to the ATPase g subunit family. Component of the ATP synthase complex composed at least of ATP5F1A/subunit alpha, ATP5F1B/subunit beta, ATP5MC1/subunit c (homooctomer), MT-ATP6/subunit a, MT-ATP8/subunit 8, ATP5ME/subunit e, ATP5MF/subunit f, ATP5MG/subunit g, ATP5MK/subunit k, ATP5MJ/subunit j, ATP5F1C/subunit gamma, ATP5F1D/subunit delta, ATP5F1E/subunit epsilon, ATP5PF/subunit F6, ATP5PB/subunit b, ATP5PD/subunit d, ATP5PO/subunit OSCP. ATP synthase complex consists of a soluble F(1) head domain (subunits alpha(3) and beta(3)) - the catalytic core - and a membrane F(0) domain - the membrane proton channel (subunits c, a, 8, e, f, g, k and j). These two domains are linked by a central stalk (subunits gamma, delta, and epsilon) rotating inside the F1 region and a stationary peripheral stalk (subunits F6, b, d, and OSCP).

It is found in the mitochondrion. The protein localises to the mitochondrion inner membrane. In terms of biological role, subunit g, of the mitochondrial membrane ATP synthase complex (F(1)F(0) ATP synthase or Complex V) that produces ATP from ADP in the presence of a proton gradient across the membrane which is generated by electron transport complexes of the respiratory chain. ATP synthase complex consist of a soluble F(1) head domain - the catalytic core - and a membrane F(1) domain - the membrane proton channel. These two domains are linked by a central stalk rotating inside the F(1) region and a stationary peripheral stalk. During catalysis, ATP synthesis in the catalytic domain of F(1) is coupled via a rotary mechanism of the central stalk subunits to proton translocation. In vivo, can only synthesize ATP although its ATP hydrolase activity can be activated artificially in vitro. Part of the complex F(0) domain. The sequence is that of ATP synthase F(0) complex subunit g, mitochondrial from Rattus norvegicus (Rat).